Consider the following 195-residue polypeptide: Large ribosomal subunit protein uL18 (195 aa).

Belongs to the universal ribosomal protein uL18 family. In terms of assembly, part of the 50S ribosomal subunit. Contacts the 5S and 23S rRNAs.

Functionally, this is one of the proteins that bind and probably mediate the attachment of the 5S RNA into the large ribosomal subunit, where it forms part of the central protuberance. The protein is Large ribosomal subunit protein uL18 of Methanococcus vannielii.